The following is a 589-amino-acid chain: Enhancer of polycomb-like protein 1 (589 aa).

Disordered regions lie at residues 298–339 (GDED…RPAE), 403–430 (MTPP…PNPP), 468–497 (LPSP…DAPV), and 516–589 (LQTV…QPVS). The span at 474–487 (DLSEEQSDRWKYDQ) shows a compositional bias: basic and acidic residues. Residues 557 to 566 (PQPNQSQSLP) are compositionally biased toward low complexity. A compositionally biased stretch (pro residues) spans 567–589 (LPQPQQPVAQPQPQPQPQAQPVS).

This sequence belongs to the enhancer of polycomb family. As to quaternary structure, component of the NuA4 histone acetyltransferase complex.

The protein resides in the nucleus. In terms of biological role, component of the NuA4 histone acetyltransferase complex which is involved in transcriptional activation of selected genes principally by acetylation of nucleosomal histone H4 and H2A. The NuA4 complex is also involved in DNA repair. Involved in gene silencing by neighboring heterochromatin, blockage of the silencing spreading along the chromosome, and required for cell cycle progression through G2/M. This is Enhancer of polycomb-like protein 1 (epl-1) from Neurospora crassa (strain ATCC 24698 / 74-OR23-1A / CBS 708.71 / DSM 1257 / FGSC 987).